A 204-amino-acid chain; its full sequence is tRNA (pseudouridine(54)-N(1))-methyltransferase (204 aa).

S-adenosyl-L-methionine is bound by residues Leu-130, Gly-157, 180–185, and Cys-190; that span reads LSPLEL.

Belongs to the methyltransferase superfamily. TrmY family. In terms of assembly, homodimer.

The protein resides in the cytoplasm. The catalysed reaction is pseudouridine(54) in tRNA + S-adenosyl-L-methionine = N(1)-methylpseudouridine(54) in tRNA + S-adenosyl-L-homocysteine + H(+). In terms of biological role, specifically catalyzes the N1-methylation of pseudouridine at position 54 (Psi54) in tRNAs. The polypeptide is tRNA (pseudouridine(54)-N(1))-methyltransferase (Methanococcus aeolicus (strain ATCC BAA-1280 / DSM 17508 / OCM 812 / Nankai-3)).